Reading from the N-terminus, the 299-residue chain is Probable 4-deoxy-4-formamido-L-arabinose-phosphoundecaprenol deformylase ArnD (299 aa).

The NodB homology domain occupies I2–V263.

Belongs to the polysaccharide deacetylase family. ArnD deformylase subfamily.

The catalysed reaction is 4-deoxy-4-formamido-alpha-L-arabinopyranosyl di-trans,octa-cis-undecaprenyl phosphate + H2O = 4-amino-4-deoxy-alpha-L-arabinopyranosyl di-trans,octa-cis-undecaprenyl phosphate + formate. The protein operates within glycolipid biosynthesis; 4-amino-4-deoxy-alpha-L-arabinose undecaprenyl phosphate biosynthesis; 4-amino-4-deoxy-alpha-L-arabinose undecaprenyl phosphate from UDP-4-deoxy-4-formamido-beta-L-arabinose and undecaprenyl phosphate: step 2/2. It participates in bacterial outer membrane biogenesis; lipopolysaccharide biosynthesis. Catalyzes the deformylation of 4-deoxy-4-formamido-L-arabinose-phosphoundecaprenol to 4-amino-4-deoxy-L-arabinose-phosphoundecaprenol. The modified arabinose is attached to lipid A and is required for resistance to polymyxin and cationic antimicrobial peptides. This is Probable 4-deoxy-4-formamido-L-arabinose-phosphoundecaprenol deformylase ArnD from Aeromonas salmonicida (strain A449).